Here is a 520-residue protein sequence, read N- to C-terminus: GMP synthase [glutamine-hydrolyzing] (520 aa).

The Glutamine amidotransferase type-1 domain maps to 12–205 (KIIVLDYGSQ…AISICGGRGD (194 aa)). The active-site Nucleophile is the C89. Active-site residues include H179 and E181. The 190-residue stretch at 206-395 (WSMDNFIDMQ…LGMPDEVVWR (190 aa)) folds into the GMPS ATP-PPase domain. Residue 233–239 (SGGVDSS) coordinates ATP.

Homodimer.

The catalysed reaction is XMP + L-glutamine + ATP + H2O = GMP + L-glutamate + AMP + diphosphate + 2 H(+). The protein operates within purine metabolism; GMP biosynthesis; GMP from XMP (L-Gln route): step 1/1. In terms of biological role, catalyzes the synthesis of GMP from XMP. This chain is GMP synthase [glutamine-hydrolyzing], found in Streptococcus equi subsp. equi (strain 4047).